The following is a 145-amino-acid chain: MNAYDAYMKEIAQQMRGELTQNGFTSLETSEAVSEYMNQVNADDTTFVVINSTCGCAAGLARPAAVAVATQNEHRPTNTVTVFAGQDKEATATMREFIQQAPSSPSYALFKGQDLVYFMPREFIEGRDINDIAMDLKDAFDENCK.

It belongs to the bacilliredoxin family.

This is Bacilliredoxin MW1318 from Staphylococcus aureus (strain MW2).